A 793-amino-acid polypeptide reads, in one-letter code: MPAGPVQAVPPPPPAATEPKQPTEEEASSKEDSTPSKPVVGIIYPPPEVRNIVDKTASFVARNGPEFEARIRQNEINNPKFNFLNPNDPYHAYYRHKVSEFKEGKAQEPSAAIPKVMQQQQQASQQQLPQKVQAQVIQETIVPKEPPPEFEFIADPPSISAFDLDVVKLTAQFVARNGRQFLTQLMQKEQRNYQFDFLRPQHSLFNYFTKLVEQYTKILIPPKGLFTKLKKEAENPREVLDQVCYRVEWAKFQERERKKEEEEKEKERVAYAQIDWHDFVVVETVDFQPNEQGNFPPPTTPEELGARILIQERYEKFGESEEVEMEVESDEEDEKQEKAEEPPSQLDQDTQVQDMDEGSDDEEEGQKVPPPPETPMPPPLPPTPDQVIVRKDYDPKASKPLPPAPAPDEYLVSPITGEKIPASKMQEHMRIGLLDPRWLEQRDRSIREKQSDDEVYAPGLDIESSLKQLAERRTDIFGVEETAIGKKIGEEEIQKPEEKVTWDGHSGSMARTQQAAQANITLQEQIEAIHKAKGLVPEDDTKEKIGPSKPNEIPQQPPPPSSATNIPSSAPPITSVPRPPAMPPPVRTTVVSAVPVMPRPPMASVVRLPPGSVIAPMPPIIHAPRINVVPMPPSAPPIMAPRPPPMIVPTAFVPAPPVAPVPAPAPMPPVHPPPPMEDEPASKKLKTEDSLMPEEEFLRRNKGPVSIKVQVPNMQDKTEWKLNGQVLVFTLPLTDQVSVIKVKIHEATGMPAGKQKLQYEGIFIKDSNSLAYYNMANGAVIHLALKERGGRKK.

The disordered stretch occupies residues 1–42 (MPAGPVQAVPPPPPAATEPKQPTEEEASSKEDSTPSKPVVGI). Lysine 20 is covalently cross-linked (Glycyl lysine isopeptide (Lys-Gly) (interchain with G-Cter in SUMO2)). Over residues 21–34 (QPTEEEASSKEDST) the composition is skewed to basic and acidic residues. The SURP motif 1 repeat unit spans residues 52–94 (IVDKTASFVARNGPEFEARIRQNEINNPKFNFLNPNDPYHAYY). Position 55 is an N6-acetyllysine (lysine 55). Lysine 131 participates in a covalent cross-link: Glycyl lysine isopeptide (Lys-Gly) (interchain with G-Cter in SUMO2). An SURP motif 2 repeat occupies 166–208 (VVKLTAQFVARNGRQFLTQLMQKEQRNYQFDFLRPQHSLFNYF). Residues 318–412 (GESEEVEMEV…PAPAPDEYLV (95 aa)) form a disordered region. Phosphoserine occurs at positions 320, 329, and 359. Acidic residues-rich tracts occupy residues 320–334 (SEEVEMEVESDEEDE) and 354–364 (DMDEGSDDEEE). Positions 368 to 384 (VPPPPETPMPPPLPPTP) are enriched in pro residues. Over residues 388–397 (IVRKDYDPKA) the composition is skewed to basic and acidic residues. Serine 413 is subject to Phosphoserine. Lysine 424 participates in a covalent cross-link: Glycyl lysine isopeptide (Lys-Gly) (interchain with G-Cter in SUMO2). At serine 451 the chain carries Phosphoserine. Tyrosine 456 carries the phosphotyrosine modification. Residues 488 to 502 (IGEEEIQKPEEKVTW) are compositionally biased toward basic and acidic residues. Disordered stretches follow at residues 488–518 (IGEEEIQKPEEKVTWDGHSGSMARTQQAAQA), 530–584 (HKAK…AMPP), and 666–685 (PMPPVHPPPPMEDEPASKKL). A Glycyl lysine isopeptide (Lys-Gly) (interchain with G-Cter in SUMO2) cross-link involves residue lysine 499. Serine 508 carries the post-translational modification Phosphoserine. The segment covering 509-518 (MARTQQAAQA) has biased composition (polar residues). Residue lysine 542 forms a Glycyl lysine isopeptide (Lys-Gly) (interchain with G-Cter in SUMO2) linkage. The span at 563 to 572 (ATNIPSSAPP) shows a compositional bias: polar residues. The segment covering 666–675 (PMPPVHPPPP) has biased composition (pro residues). Positions 680–702 (PASKKLKTEDSLMPEEEFLRRNK) are required and sufficient for nuclear import. Residue lysine 686 forms a Glycyl lysine isopeptide (Lys-Gly) (interchain with G-Cter in SUMO2) linkage. The Ubiquitin-like domain maps to 707–793 (IKVQVPNMQD…ALKERGGRKK (87 aa)). Tyrosine 759 is modified (phosphotyrosine).

Component of the 17S U2 SnRNP complex, a ribonucleoprotein complex that contains small nuclear RNA (snRNA) U2 and a number of specific proteins. Part of the SF3A subcomplex of the 17S U2 SnRNP complex which is composed of three subunits; SF3A3/SAP61, SF3A2/SAP62 and SF3A1/SAP114. SF3A associates with the splicing factor SF3B and a 12S RNA unit to form the mature 17S U2 small nuclear ribonucleoprotein complex (17S U2 snRNP). SF3A1 functions as a scaffold that interacts directly with both SF3A2 and SF3A3. Identified in the spliceosome 'E' complex, a precursor of the spliceosome 'A' complex. Identified in the spliceosome 'A' and 'B' complexes. Identified in the spliceosome 'C' complex. Interacts with P2RX6; resulting in a reduction of the splicing activity.

The protein resides in the nucleus. The protein localises to the nucleus speckle. Component of the 17S U2 SnRNP complex of the spliceosome, a large ribonucleoprotein complex that removes introns from transcribed pre-mRNAs. The 17S U2 SnRNP complex (1) directly participates in early spliceosome assembly and (2) mediates recognition of the intron branch site during pre-mRNA splicing by promoting the selection of the pre-mRNA branch-site adenosine, the nucleophile for the first step of splicing. Within the 17S U2 SnRNP complex, SF3A1 is part of the SF3A subcomplex that contributes to the assembly of the 17S U2 snRNP, and the subsequent assembly of the pre-spliceosome 'E' complex and the pre-catalytic spliceosome 'A' complex. Involved in pre-mRNA splicing as a component of pre-catalytic spliceosome 'B' complexes. The polypeptide is Splicing factor 3A subunit 1 (SF3A1) (Bos taurus (Bovine)).